The chain runs to 339 residues: Phenylalanine--tRNA ligase alpha subunit (339 aa).

Position 254 (E254) interacts with Mg(2+).

This sequence belongs to the class-II aminoacyl-tRNA synthetase family. Phe-tRNA synthetase alpha subunit type 1 subfamily. In terms of assembly, tetramer of two alpha and two beta subunits. Requires Mg(2+) as cofactor.

Its subcellular location is the cytoplasm. The catalysed reaction is tRNA(Phe) + L-phenylalanine + ATP = L-phenylalanyl-tRNA(Phe) + AMP + diphosphate + H(+). This is Phenylalanine--tRNA ligase alpha subunit from Clostridium botulinum (strain Langeland / NCTC 10281 / Type F).